The primary structure comprises 33 residues: Pardaxin P-4 (33 aa).

Belongs to the pardaxin family. In terms of assembly, monomer. In aqueous solution exists as a tetramer.

It is found in the secreted. The protein resides in the target cell membrane. Functionally, exhibits unusual shark repellent and surfactant properties. Forms voltage-dependent, ion-permeable channels in membranes. At high concentration causes cell membrane lysis. This is Pardaxin P-4 from Pardachirus marmoratus (Finless sole).